The chain runs to 63 residues: Potassium channel toxin alpha-KTx 21.1 (63 aa).

Residues 1-27 (MQFSGVVLILISMTLVNFVFFETKVEA) form the signal peptide. 3 cysteine pairs are disulfide-bonded: Cys-33–Cys-53, Cys-38–Cys-58, and Cys-42–Cys-60.

Belongs to the short scorpion toxin superfamily. Potassium channel inhibitor family. Alpha-KTx 21 subfamily. As to expression, expressed by the venom gland.

The protein localises to the secreted. Functionally, reversibly and voltage-independently blocks voltage-gated potassium channels rKv1.2/KCNA2 (73%) (IC(50)=196 nM), hKv1.3/KCNA3 (50%) (IC(50)=508 nM), Shaker IR (30%), rKv1.6/KCNA6 (22%) (at 0.5 uM). Interaction of Ts15 with Kv1.3/KCNA3 is stronger than its interaction with Kv1.2/KCNA2. The protein is Potassium channel toxin alpha-KTx 21.1 of Tityus serrulatus (Brazilian scorpion).